The primary structure comprises 564 residues: Potassium-transporting ATPase potassium-binding subunit (564 aa).

A run of 10 helical transmembrane segments spans residues 4-24 (YDYL…PWLG), 67-87 (TLAL…VLLL), 135-155 (IGLT…LVAL), 179-199 (LYGL…QGVP), 258-278 (FEVA…GHYV), 286-306 (AIIA…LWSE), 382-402 (AGLY…GLMI), 420-440 (LLVA…AIAA), 487-507 (VMIG…VLAL), and 534-554 (LLLL…LALG).

It belongs to the KdpA family. As to quaternary structure, the system is composed of three essential subunits: KdpA, KdpB and KdpC.

The protein localises to the cell inner membrane. Functionally, part of the high-affinity ATP-driven potassium transport (or Kdp) system, which catalyzes the hydrolysis of ATP coupled with the electrogenic transport of potassium into the cytoplasm. This subunit binds the periplasmic potassium ions and delivers the ions to the membrane domain of KdpB through an intramembrane tunnel. The polypeptide is Potassium-transporting ATPase potassium-binding subunit (Pseudomonas entomophila (strain L48)).